The following is a 327-amino-acid chain: Methionyl-tRNA formyltransferase (327 aa).

121 to 124 is a (6S)-5,6,7,8-tetrahydrofolate binding site; that stretch reads SLLP.

This sequence belongs to the Fmt family.

The catalysed reaction is L-methionyl-tRNA(fMet) + (6R)-10-formyltetrahydrofolate = N-formyl-L-methionyl-tRNA(fMet) + (6S)-5,6,7,8-tetrahydrofolate + H(+). Attaches a formyl group to the free amino group of methionyl-tRNA(fMet). The formyl group appears to play a dual role in the initiator identity of N-formylmethionyl-tRNA by promoting its recognition by IF2 and preventing the misappropriation of this tRNA by the elongation apparatus. This is Methionyl-tRNA formyltransferase from Burkholderia ambifaria (strain ATCC BAA-244 / DSM 16087 / CCUG 44356 / LMG 19182 / AMMD) (Burkholderia cepacia (strain AMMD)).